A 466-amino-acid chain; its full sequence is Vacuolar protein sorting-associated protein 30 (466 aa).

The tract at residues 35–55 (SETNTDNSDNNKHNGENDRNI) is disordered. The span at 43–53 (DNNKHNGENDR) shows a compositional bias: basic and acidic residues. Residues 149–258 (DTLLEKLKEE…QMEHLSFIKD (110 aa)) are a coiled coil. Positions 279-463 (LNIYNETFRI…LAFSTSRINK (185 aa)) are BARA. Residues 439-464 (WTTACKFLLTNIKWLLAFSTSRINKA) are required for membrane-association, autophagic function during starvation and normal autophagosome morphology.

This sequence belongs to the beclin family. Component of the autophagy-specific VPS34 PI3-kinase complex I; and of the VPS34 PI3-kinase complex II.

The protein localises to the endosome membrane. It localises to the vacuole membrane. Its subcellular location is the preautophagosomal structure membrane. In terms of biological role, required for cytoplasm to vacuole transport (Cvt), autophagy, nucleophagy, and mitophagy, as a part of the autophagy-specific VPS34 PI3-kinase complex I. This complex is essential to recruit the ATG8-phosphatidylinositol conjugate and the ATG12-ATG5 conjugate to the pre-autophagosomal structure. Also involved in endosome-to-Golgi retrograde transport as part of the VPS34 PI3-kinase complex II. The chain is Vacuolar protein sorting-associated protein 30 from Kluyveromyces marxianus (strain DMKU3-1042 / BCC 29191 / NBRC 104275) (Yeast).